The following is a 364-amino-acid chain: Lysophosphatidic acid receptor 1 (364 aa).

The Extracellular portion of the chain corresponds to 1 to 50 (MAAISTSIPVISQPQFTAMNEPQCFYNESIAFFYNRSGKHLATEWNTVSK). Intrachain disulfides connect cysteine 24–cysteine 190 and cysteine 188–cysteine 195. N-linked (GlcNAc...) asparagine glycans are attached at residues asparagine 27 and asparagine 35. A 1-acyl-sn-glycero-3-phosphate is bound at residue lysine 39. Residues 51–75 (LVMGLGITVCIFIMLANLLVMVAIY) traverse the membrane as a helical segment. The Cytoplasmic portion of the chain corresponds to 76–83 (VNRRFHFP). A helical transmembrane segment spans residues 84–107 (IYYLMANLAAADFFAGLAYFYLMF). Topologically, residues 108-121 (NTGPNTRRLTVSTW) are extracellular. A helical transmembrane segment spans residues 122–144 (LLRQGLIDTSLTASVANLLAIAI). 124–129 (RQGLID) is an a 1-acyl-sn-glycero-3-phosphate binding site. The Cytoplasmic portion of the chain corresponds to 145-163 (ERHITVFRMQLHTRMSNRR). A helical membrane pass occupies residues 164 to 184 (VVVVIVVIWTMAIVMGAIPSV). Residues 185–204 (GWNCICDIENCSNMAPLYSD) lie on the Extracellular side of the membrane. A helical membrane pass occupies residues 205-225 (SYLVFWAIFNLVTFVVMVVLY). Tryptophan 210 contacts a 1-acyl-sn-glycero-3-phosphate. Topologically, residues 226 to 255 (AHIFGYVRQRTMRMSRHSSGPRRNRDTMMS) are cytoplasmic. The helical transmembrane segment at 256-280 (LLKTVVIVLGAFIICWTPGLVLLLL) threads the bilayer. At 281-294 (DVCCPQCDVLAYEK) the chain is on the extracellular side. Cysteine 284 and cysteine 287 are disulfide-bonded. A helical membrane pass occupies residues 295–315 (FFLLLAEFNSAMNPIIYSYRD). At 316-364 (KEMSATFRQILCCQRSENPTGPTEGSDRSASSLNHTILAGVHSNDHSVV) the chain is on the cytoplasmic side. Position 341 is a phosphoserine (serine 341). Position 351 is a phosphothreonine (threonine 351).

The protein belongs to the G-protein coupled receptor 1 family. In terms of assembly, interacts with RALA and GRK2. Interacts with GNAQ and GNA13. Interacts with CD14; the interaction is enhanced by exposure to bacterial lipopolysaccharide (LPS). Post-translationally, N-glycosylated. As to expression, expressed in many adult organs, including brain, heart, colon, small intestine, placenta, prostate, ovary, pancreas, testes, spleen, skeletal muscle, and kidney. Little or no expression in liver, lung, thymus, or peripheral blood leukocytes. Detected in lung fibroblasts from bronchoalveolar fluid from patients with idiopathic pulmonary fibrosis. Detected in bone marrow-derived mesenchymal stem cells.

The protein localises to the cell surface. It localises to the cell membrane. The protein resides in the endosome. Receptor for lysophosphatidic acid (LPA). Plays a role in the reorganization of the actin cytoskeleton, cell migration, differentiation and proliferation, and thereby contributes to the responses to tissue damage and infectious agents. Activates downstream signaling cascades via the G(i)/G(o), G(12)/G(13), and G(q) families of heteromeric G proteins. Signaling inhibits adenylyl cyclase activity and decreases cellular cAMP levels. Signaling triggers an increase of cytoplasmic Ca(2+) levels. Activates RALA; this leads to the activation of phospholipase C (PLC) and the formation of inositol 1,4,5-trisphosphate. Signaling mediates activation of down-stream MAP kinases. Contributes to the regulation of cell shape. Promotes Rho-dependent reorganization of the actin cytoskeleton in neuronal cells and neurite retraction. Promotes the activation of Rho and the formation of actin stress fibers. Promotes formation of lamellipodia at the leading edge of migrating cells via activation of RAC1. Through its function as LPA receptor, plays a role in chemotaxis and cell migration, including responses to injury and wounding. Plays a role in triggering inflammation in response to bacterial lipopolysaccharide (LPS) via its interaction with CD14. Promotes cell proliferation in response to LPA. Inhibits the intracellular ciliogenesis pathway in response to LPA and through AKT1 activation. Required for normal skeleton development. May play a role in osteoblast differentiation. Required for normal brain development. Required for normal proliferation, survival and maturation of newly formed neurons in the adult dentate gyrus. Plays a role in pain perception and in the initiation of neuropathic pain. The chain is Lysophosphatidic acid receptor 1 (LPAR1) from Homo sapiens (Human).